The chain runs to 651 residues: Bromodomain-containing protein 7 (651 aa).

A Glycyl lysine isopeptide (Lys-Gly) (interchain with G-Cter in SUMO2) cross-link involves residue Lys-21. The segment at 34 to 103 is disordered; it reads VTELSTGSSG…RDRAENEVDR (70 aa). The segment covering 35 to 45 has biased composition (polar residues); it reads TELSTGSSGHD. Positions 47-57 are enriched in basic and acidic residues; sequence SLFEDRSDHDK. A compositionally biased stretch (basic residues) spans 58–69; the sequence is HKDRKRKKRKKG. A Nuclear localization signal motif is present at residues 65-96; the sequence is KRKKGEKQAPGEEKGRKRRRVKEDKKKRDRDR. The segment covering 70–103 has biased composition (basic and acidic residues); the sequence is EKQAPGEEKGRKRRRVKEDKKKRDRDRAENEVDR. Glycyl lysine isopeptide (Lys-Gly) (interchain with G-Cter in SUMO2) cross-links involve residues Lys-127, Lys-186, Lys-197, Lys-201, Lys-212, and Lys-241. The region spanning 131 to 235 is the Bromo domain; it reads VEQTPLQEAL…HSGMKILSQE (105 aa). Positions 252–316 are disordered; sequence KTRKQKERTD…RSSNSEREHE (65 aa). A phosphoserine mark is found at Ser-279 and Ser-289. The segment covering 290–316 has biased composition (basic and acidic residues); it reads PAKDNKRKDKDVLEDKWRSSNSEREHE. A Glycyl lysine isopeptide (Lys-Gly) (interchain with G-Cter in SUMO2) cross-link involves residue Lys-305. At Lys-328 the chain carries N6-acetyllysine. Lys-344 is covalently cross-linked (Glycyl lysine isopeptide (Lys-Gly) (interchain with G-Cter in SUMO2)). A Phosphoserine modification is found at Ser-380. Residue Lys-389 forms a Glycyl lysine isopeptide (Lys-Gly) (interchain with G-Cter in SUMO2) linkage. 3 positions are modified to phosphoserine: Ser-475, Ser-482, and Ser-483. Positions 536–567 form a coiled coil; it reads SEEAEVFQRKLDETTRLLRELQEAQNERLSTR. Phosphoserine is present on Ser-621.

Interacts with IRF2 and HNRPUL1. Interacts (via N-terminus) with TP53. Interacts (via C-terminus) with EP300. Interacts with BRCA1. Interacts (via bromo domain) with histone H3 (via N-terminus) acetylated at 'Lys-14' (H3K14ac). Has low affinity for histone H3 acetylated at 'Lys-9' (H3K9ac). Has the highest affinity for histone H3 that is acetylated both at 'Lys-9' (H3K9ac) and at 'Lys-14' (H3K14ac). Has very low affinity for non-acetylated histone H3. Interacts (via bromo domain) with histone H4 (via N-terminus) acetylated at 'Lys-8' (H3K8ac) (in vitro). Interacts with TRIM24, PTPN13 and DVL1. Identified in a complex with SMARCA4/BRG1, SMARCC1/BAF155, SMARCE1/BAF57, DPF2/BAF45D and ARID2, subunits of the SWI/SNF-B (PBAF) chromatin remodeling complex. Ubiquitous.

It localises to the nucleus. It is found in the chromosome. In terms of biological role, acts both as coactivator and as corepressor. May play a role in chromatin remodeling. Transcriptional corepressor that down-regulates the expression of target genes. Binds to target promoters, leading to increased histone H3 acetylation at 'Lys-9' (H3K9ac). Binds to the ESR1 promoter. Recruits BRCA1 and POU2F1 to the ESR1 promoter. Coactivator for TP53-mediated activation of transcription of a set of target genes. Required for TP53-mediated cell-cycle arrest in response to oncogene activation. Promotes acetylation of TP53 at 'Lys-382', and thereby promotes efficient recruitment of TP53 to target promoters. Inhibits cell cycle progression from G1 to S phase. Activator of the Wnt signaling pathway in a DVL1-dependent manner by negatively regulating the GSK3B phosphotransferase activity. Induces dephosphorylation of GSK3B at 'Tyr-216'. Down-regulates TRIM24-mediated activation of transcriptional activation by AR. In Mus musculus (Mouse), this protein is Bromodomain-containing protein 7 (Brd7).